Consider the following 636-residue polypeptide: MKRKLNENNEPVLVSGTNKKKSDTEVSSAVANATPSSEAASSSSFADLGLDPRLLQAVAQQSFQKPTLVQSKAIPLALEGRDVLAKAKTGSGKTAAYVLPILQAVLKRKQINPGATYISSLILVPTRELTVQVTKEVERFSAFCAKEVQVVGLTDKVSDAVQRSLLQSSSPDIVVSTPSTAWRNVDSGALSLDKLTHLVLDEADLVLSYGYDEDLEKVARGLPKGVQTVMTSATLTDEIDTLKGIFLRDPVLLDLEEPDAEGSEITQYIVKCGEDEKFLLAYILFKLQLIKGKVIIFVADVDRCYRLKLFFEQFGIRSCILNSELPVNSRISVVEEFNRNVYDIIIASDENEMMGDEDRPAPNGDGKEEAEVDKKHENEDEGQDGEASKAAPRPKKKRKMDRKRDKQYGVSRGIDFKNVAVVVNFDLPLSSTSYTHRIGRTGRAGQAGMVLSFYVPKELFRKHIPTSIDSAENDEKVLARVIKQQKKLGREIKPYNFDRDQVESFRYRMNDALRAVTKIAVREARTRELRQELLKSEKLKRHFEENPAELQHLVRHDGELRTARANPELRHVPDYLLPKEGRKGLSAAEIGFVPLRKSSDRQKKGRFFKKGGARSFKAGGRKPDPLKTFKAKRKTK.

Residues 1–44 (MKRKLNENNEPVLVSGTNKKKSDTEVSSAVANATPSSEAASSSS) form a disordered region. Over residues 31–44 (ANATPSSEAASSSS) the composition is skewed to low complexity. The Q motif signature appears at 43–71 (SSFADLGLDPRLLQAVAQQSFQKPTLVQS). The region spanning 74-253 (IPLALEGRDV…GIFLRDPVLL (180 aa)) is the Helicase ATP-binding domain. 87 to 94 (AKTGSGKT) is an ATP binding site. The DEAD box motif lies at 201–204 (DEAD). In terms of domain architecture, Helicase C-terminal spans 264-489 (EITQYIVKCG…RVIKQQKKLG (226 aa)). Disordered stretches follow at residues 352-407 (EMMG…RDKQ) and 600-636 (DRQK…RKTK). Basic and acidic residues predominate over residues 356–378 (DEDRPAPNGDGKEEAEVDKKHEN). 2 stretches are compositionally biased toward basic residues: residues 392–401 (PRPKKKRKMD) and 603–612 (KKGRFFKKGG).

The protein belongs to the DEAD box helicase family. DDX56/DBP9 subfamily.

It is found in the nucleus. It localises to the nucleolus. The catalysed reaction is ATP + H2O = ADP + phosphate + H(+). Functionally, ATP-binding RNA helicase involved in the biogenesis of 60S ribosomal subunits and is required for the normal formation of 25S and 5.8S rRNAs. This Pyricularia oryzae (strain 70-15 / ATCC MYA-4617 / FGSC 8958) (Rice blast fungus) protein is ATP-dependent RNA helicase DBP9 (DBP9).